A 491-amino-acid chain; its full sequence is Glucose-6-phosphate exchanger SLC37A2 (491 aa).

A helical membrane pass occupies residues 5-25 (LAPGIWYRAFILLITFLIYTC). 3 N-linked (GlcNAc...) asparagine glycosylation sites follow: asparagine 43, asparagine 52, and asparagine 58. A run of 5 helical transmembrane segments spans residues 78-98 (GAVD…SGIF), 108-130 (LTAG…FWNI), 132-154 (VLWY…WPAV), 169-189 (LIMG…SLLA), and 200-220 (SFVV…FFLI). A disordered region spans residues 229–257 (SPPQHHGNPEESQDQPEDPANGPSCNKES). 6 helical membrane-spanning segments follow: residues 292 to 312 (LCLL…PLYI), 328 to 348 (TLFD…SDYI), 352 to 372 (ATTC…YNHV), 377 to 397 (IGIS…PYAL), 424 to 444 (AIID…AGLI), and 452 to 472 (VFYM…RLVY).

This sequence belongs to the major facilitator superfamily. Organophosphate:Pi antiporter (OPA) (TC 2.A.1.4) family.

It is found in the endoplasmic reticulum membrane. It carries out the reaction D-glucose 6-phosphate(in) + phosphate(out) = D-glucose 6-phosphate(out) + phosphate(in). With respect to regulation, inhibited by vanadate but not by chlorogenic acid. In terms of biological role, inorganic phosphate and glucose-6-phosphate antiporter. May transport cytoplasmic glucose-6-phosphate into the lumen of the endoplasmic reticulum and translocate inorganic phosphate into the opposite direction. Independent of a lumenal glucose-6-phosphatase. May not play a role in homeostatic regulation of blood glucose levels. This chain is Glucose-6-phosphate exchanger SLC37A2, found in Bos taurus (Bovine).